Reading from the N-terminus, the 66-residue chain is Large ribosomal subunit protein bL31 (66 aa).

Zn(2+) is bound by residues Cys-16, Cys-18, Cys-36, and Cys-39.

This sequence belongs to the bacterial ribosomal protein bL31 family. Type A subfamily. As to quaternary structure, part of the 50S ribosomal subunit. Zn(2+) serves as cofactor.

In terms of biological role, binds the 23S rRNA. In Thermodesulfovibrio yellowstonii (strain ATCC 51303 / DSM 11347 / YP87), this protein is Large ribosomal subunit protein bL31.